We begin with the raw amino-acid sequence, 245 residues long: UDP-2,3-diacylglucosamine hydrolase (245 aa).

Mn(2+)-binding residues include aspartate 8, histidine 10, aspartate 41, asparagine 79, and histidine 114. 79–80 contributes to the substrate binding site; it reads NR. Substrate contacts are provided by aspartate 122, serine 160, asparagine 164, lysine 167, and histidine 195. Mn(2+) contacts are provided by histidine 195 and histidine 197.

This sequence belongs to the LpxH family. Requires Mn(2+) as cofactor.

The protein resides in the cell inner membrane. The catalysed reaction is UDP-2-N,3-O-bis[(3R)-3-hydroxytetradecanoyl]-alpha-D-glucosamine + H2O = 2-N,3-O-bis[(3R)-3-hydroxytetradecanoyl]-alpha-D-glucosaminyl 1-phosphate + UMP + 2 H(+). The protein operates within glycolipid biosynthesis; lipid IV(A) biosynthesis; lipid IV(A) from (3R)-3-hydroxytetradecanoyl-[acyl-carrier-protein] and UDP-N-acetyl-alpha-D-glucosamine: step 4/6. Hydrolyzes the pyrophosphate bond of UDP-2,3-diacylglucosamine to yield 2,3-diacylglucosamine 1-phosphate (lipid X) and UMP by catalyzing the attack of water at the alpha-P atom. Involved in the biosynthesis of lipid A, a phosphorylated glycolipid that anchors the lipopolysaccharide to the outer membrane of the cell. The sequence is that of UDP-2,3-diacylglucosamine hydrolase from Photobacterium profundum (strain SS9).